Consider the following 363-residue polypeptide: Spore germination protein YndE (363 aa).

The next 10 helical transmembrane spans lie at 8–28 (ITTA…GVLT), 41–61 (DGWI…MIIA), 84–104 (LGHL…AFEV), 113–133 (FFLL…WIGL), 149–169 (MIFP…LGIF), 189–209 (VKTT…VAFM), 218–238 (AVVI…IMVI), 273–293 (FLLV…FYAA), 305–325 (PLSC…MPKN), and 335–355 (TVSH…LVIS).

The protein belongs to the amino acid-polyamine-organocation (APC) superfamily. Spore germination protein (SGP) (TC 2.A.3.9) family.

The protein resides in the cell membrane. Its function is as follows. Involved in the germinative response to L-alanine. Could be an amino acid transporter. The protein is Spore germination protein YndE (yndE) of Bacillus subtilis (strain 168).